A 212-amino-acid chain; its full sequence is Large ribosomal subunit protein uL1 (212 aa).

Belongs to the universal ribosomal protein uL1 family. In terms of assembly, part of the 50S ribosomal subunit.

Functionally, binds directly to 23S rRNA. Probably involved in E site tRNA release. Its function is as follows. Protein L1 is also a translational repressor protein, it controls the translation of its operon by binding to its mRNA. The chain is Large ribosomal subunit protein uL1 from Methanothermobacter thermautotrophicus (strain ATCC 29096 / DSM 1053 / JCM 10044 / NBRC 100330 / Delta H) (Methanobacterium thermoautotrophicum).